The following is a 425-amino-acid chain: Serine hydroxymethyltransferase (425 aa).

(6S)-5,6,7,8-tetrahydrofolate is bound by residues leucine 126 and 130–132; that span reads GHL. Lysine 234 carries the N6-(pyridoxal phosphate)lysine modification.

The protein belongs to the SHMT family. Homodimer. Pyridoxal 5'-phosphate is required as a cofactor.

It localises to the cytoplasm. The catalysed reaction is (6R)-5,10-methylene-5,6,7,8-tetrahydrofolate + glycine + H2O = (6S)-5,6,7,8-tetrahydrofolate + L-serine. Its pathway is one-carbon metabolism; tetrahydrofolate interconversion. It functions in the pathway amino-acid biosynthesis; glycine biosynthesis; glycine from L-serine: step 1/1. In terms of biological role, catalyzes the reversible interconversion of serine and glycine with tetrahydrofolate (THF) serving as the one-carbon carrier. This reaction serves as the major source of one-carbon groups required for the biosynthesis of purines, thymidylate, methionine, and other important biomolecules. Also exhibits THF-independent aldolase activity toward beta-hydroxyamino acids, producing glycine and aldehydes, via a retro-aldol mechanism. In Desulfotalea psychrophila (strain LSv54 / DSM 12343), this protein is Serine hydroxymethyltransferase.